The sequence spans 577 residues: MPRGLELLIAQTILQGFDAQYGRFLEVTSGAQQRFEQADWHAVQQAMKSRIHLYDHHVGLVVEQLRCITNGQSTDAAFLLRVKEHYTRLLPDYPRFEIAESFFNSVYCRLFDHRSLTPERLFIFSSQPERRFRTIPRPLAKDFYPDHGWESLLMRVISDLPLRLRWQNKSRDIHYIIRHLTEMLGTDNLAESHLQVANELFYRNKAAWLVGKLNTPFGTLPFLLPIHQTDDGELFIDTCLTTTAEASIVFGFARSYFMVYAPLPAALVEWLREILPGKTTAELYMAIGCQKHAKTESYREYLVYLQGCNEQFIEAPGIRGMVMLVFTLPGFDRVFKVIKDKFAPQKEMSAAHVRACYQLVKEHDRVGRMADTQEFENFVLEKRHISPTLMELLLQEAAEKITDLGEQIVIRHLYIERRMVPLNIWLEQVEGQQLRDAIEEYGNAIRQLAAANIFPGDMLFKNFGVTRHGRVVFYDYDEICYMTEVNFRDIPPSRYPEDELASEPWYSVSPGDVFPEEFRHWLCADPRIGPLFEEMHADLFRADYWRALQNRIREGHVEDVYAYRRRQRFSVRYRPQV.

Residues 315 to 321 (APGIRGM) and Lys336 contribute to the ATP site. Asp371 is an active-site residue.

It belongs to the AceK family.

The protein localises to the cytoplasm. It catalyses the reaction L-seryl-[isocitrate dehydrogenase] + ATP = O-phospho-L-seryl-[isocitrate dehydrogenase] + ADP + H(+). Functionally, bifunctional enzyme which can phosphorylate or dephosphorylate isocitrate dehydrogenase (IDH) on a specific serine residue. This is a regulatory mechanism which enables bacteria to bypass the Krebs cycle via the glyoxylate shunt in response to the source of carbon. When bacteria are grown on glucose, IDH is fully active and unphosphorylated, but when grown on acetate or ethanol, the activity of IDH declines drastically concomitant with its phosphorylation. The protein is Isocitrate dehydrogenase kinase/phosphatase of Escherichia fergusonii (strain ATCC 35469 / DSM 13698 / CCUG 18766 / IAM 14443 / JCM 21226 / LMG 7866 / NBRC 102419 / NCTC 12128 / CDC 0568-73).